The primary structure comprises 396 residues: Elongation factor Tu (396 aa).

One can recognise a tr-type G domain in the interval 10–206 (KPHVNVGTIG…VLDTYIPEPE (197 aa)). The G1 stretch occupies residues 19 to 26 (GHVDHGKT). 19–26 (GHVDHGKT) is a binding site for GTP. Position 26 (Thr-26) interacts with Mg(2+). The segment at 60–64 (GITIN) is G2. The G3 stretch occupies residues 81-84 (DCPG). GTP contacts are provided by residues 81-85 (DCPGH) and 136-139 (NKCD). Residues 136-139 (NKCD) are G4. Residues 174 to 176 (SAT) form a G5 region.

The protein belongs to the TRAFAC class translation factor GTPase superfamily. Classic translation factor GTPase family. EF-Tu/EF-1A subfamily. In terms of assembly, monomer.

The protein localises to the cytoplasm. The catalysed reaction is GTP + H2O = GDP + phosphate + H(+). Functionally, GTP hydrolase that promotes the GTP-dependent binding of aminoacyl-tRNA to the A-site of ribosomes during protein biosynthesis. The chain is Elongation factor Tu from Psychrobacter cryohalolentis (strain ATCC BAA-1226 / DSM 17306 / VKM B-2378 / K5).